Consider the following 384-residue polypeptide: NAD(P) transhydrogenase subunit alpha part 1 (384 aa).

The segment at 126-136 (PRISRAQSMDI) is RQD loop; involved in interaction with PntB. NAD(+) contacts are provided by residues 127-129 (RIS), 132-135 (QSMD), 180-182 (VGV), 202-204 (DVR), Gly234, Gln247, and Leu266.

Belongs to the AlaDH/PNT family. Heterotrimer of two alpha chains and a beta (PntB) chain; in Rhodospirillum, the alpha chain is made of two subunits (PntAA and PntAB) and forms a dimer.

The enzyme catalyses NAD(+) + NADPH + H(+)(in) = NADH + NADP(+) + H(+)(out). Its function is as follows. The transhydrogenation between NADH and NADP is coupled to respiration and ATP hydrolysis and functions as a proton pump across the membrane. This is NAD(P) transhydrogenase subunit alpha part 1 (pntAA) from Rhodospirillum rubrum (strain ATCC 11170 / ATH 1.1.1 / DSM 467 / LMG 4362 / NCIMB 8255 / S1).